We begin with the raw amino-acid sequence, 78 residues long: Translational regulator CsrA (78 aa).

It belongs to the CsrA/RsmA family. In terms of assembly, homodimer; the beta-strands of each monomer intercalate to form a hydrophobic core, while the alpha-helices form wings that extend away from the core.

Its subcellular location is the cytoplasm. In terms of biological role, a translational regulator that binds mRNA to regulate translation initiation and/or mRNA stability. Usually binds in the 5'-UTR at or near the Shine-Dalgarno sequence preventing ribosome-binding, thus repressing translation. Its main target seems to be the major flagellin gene, while its function is anatagonized by FliW. The protein is Translational regulator CsrA of Caldicellulosiruptor bescii (strain ATCC BAA-1888 / DSM 6725 / KCTC 15123 / Z-1320) (Anaerocellum thermophilum).